Here is a 386-residue protein sequence, read N- to C-terminus: Succinate--CoA ligase [ADP-forming] subunit beta (386 aa).

In terms of domain architecture, ATP-grasp spans 9 to 244 (KDILRQFGVP…LDEEDPAEVE (236 aa)). ATP is bound by residues Lys46, 53–55 (GRG), Glu99, Ala102, and Glu107. Mg(2+)-binding residues include Asn199 and Asp213. Residues Asn264 and 321–323 (GIM) each bind substrate.

This sequence belongs to the succinate/malate CoA ligase beta subunit family. In terms of assembly, heterotetramer of two alpha and two beta subunits. The cofactor is Mg(2+).

The catalysed reaction is succinate + ATP + CoA = succinyl-CoA + ADP + phosphate. It carries out the reaction GTP + succinate + CoA = succinyl-CoA + GDP + phosphate. It participates in carbohydrate metabolism; tricarboxylic acid cycle; succinate from succinyl-CoA (ligase route): step 1/1. Succinyl-CoA synthetase functions in the citric acid cycle (TCA), coupling the hydrolysis of succinyl-CoA to the synthesis of either ATP or GTP and thus represents the only step of substrate-level phosphorylation in the TCA. The beta subunit provides nucleotide specificity of the enzyme and binds the substrate succinate, while the binding sites for coenzyme A and phosphate are found in the alpha subunit. This Delftia acidovorans (strain DSM 14801 / SPH-1) protein is Succinate--CoA ligase [ADP-forming] subunit beta.